The primary structure comprises 185 residues: Elongation factor P (185 aa).

This sequence belongs to the elongation factor P family.

It localises to the cytoplasm. The protein operates within protein biosynthesis; polypeptide chain elongation. Functionally, involved in peptide bond synthesis. Stimulates efficient translation and peptide-bond synthesis on native or reconstituted 70S ribosomes in vitro. Probably functions indirectly by altering the affinity of the ribosome for aminoacyl-tRNA, thus increasing their reactivity as acceptors for peptidyl transferase. This is Elongation factor P from Nostoc punctiforme (strain ATCC 29133 / PCC 73102).